A 466-amino-acid polypeptide reads, in one-letter code: Soluble pyridine nucleotide transhydrogenase (466 aa).

36–45 (ERYHNVGGGC) serves as a coordination point for FAD.

The protein belongs to the class-I pyridine nucleotide-disulfide oxidoreductase family. FAD serves as cofactor.

The protein resides in the cytoplasm. The catalysed reaction is NAD(+) + NADPH = NADH + NADP(+). Its function is as follows. Conversion of NADPH, generated by peripheral catabolic pathways, to NADH, which can enter the respiratory chain for energy generation. In Enterobacter sp. (strain 638), this protein is Soluble pyridine nucleotide transhydrogenase.